A 295-amino-acid chain; its full sequence is MTSTINKPLDGEGSVQVKQDPKINIEEGALVIAVYGKGGIGKSTTSSNLSAAFSKLGKKVLQIGCDPKHDSTFTLTHKMVPTVIDILEEVDFHSEELRPTDFMFEGFNGVMCVESGGPPAGTGCGGYVTGQTVKLLKEHHLLEDTDVVIFDVLGDVVCGGFAAPLQHANYCLIVTANDFDSIFAMNRIVSAIKAKAKNYKVRLGGVVANRSKDTDQIDKFNERTGLKTMAHFKDVDAIRRSRLKKCTIFEMEPTEDVIEVQNEYLSLAKNMLENVEPLEGNPLKDREIFDLLGFD.

Residues Gly-39–Thr-44 and Lys-68 contribute to the ATP site. Ser-43 contacts Mg(2+). 2 residues coordinate [4Fe-4S] cluster: Cys-124 and Cys-158. Asn-209–Arg-210 contributes to the ATP binding site.

It belongs to the NifH/BchL/ChlL family. Homodimer. Protochlorophyllide reductase is composed of three subunits; ChlL, ChlN and ChlB. [4Fe-4S] cluster is required as a cofactor.

The catalysed reaction is chlorophyllide a + oxidized 2[4Fe-4S]-[ferredoxin] + 2 ADP + 2 phosphate = protochlorophyllide a + reduced 2[4Fe-4S]-[ferredoxin] + 2 ATP + 2 H2O. It functions in the pathway porphyrin-containing compound metabolism; chlorophyll biosynthesis (light-independent). Component of the dark-operative protochlorophyllide reductase (DPOR) that uses Mg-ATP and reduced ferredoxin to reduce ring D of protochlorophyllide (Pchlide) to form chlorophyllide a (Chlide). This reaction is light-independent. The L component serves as a unique electron donor to the NB-component of the complex, and binds Mg-ATP. This is Light-independent protochlorophyllide reductase iron-sulfur ATP-binding protein from Prochlorococcus marinus (strain MIT 9312).